The following is a 453-amino-acid chain: Putative ABC transporter ATP-binding protein MM_0462 (453 aa).

Positions 4–239 constitute an ABC transporter domain; sequence LETRSLKYSY…QELLKKVGLR (236 aa). 37 to 44 contributes to the ATP binding site; it reads GQNGSGKS.

The protein belongs to the ABC transporter superfamily.

It is found in the cell membrane. Probably part of an ABC transporter complex. Responsible for energy coupling to the transport system. The chain is Putative ABC transporter ATP-binding protein MM_0462 from Methanosarcina mazei (strain ATCC BAA-159 / DSM 3647 / Goe1 / Go1 / JCM 11833 / OCM 88) (Methanosarcina frisia).